Consider the following 231-residue polypeptide: tRNA (guanine-N(1)-)-methyltransferase (231 aa).

Gly-112 provides a ligand contact to S-adenosyl-L-methionine.

The protein belongs to the RNA methyltransferase TrmD family. In terms of assembly, homodimer.

The protein resides in the cytoplasm. It catalyses the reaction guanosine(37) in tRNA + S-adenosyl-L-methionine = N(1)-methylguanosine(37) in tRNA + S-adenosyl-L-homocysteine + H(+). Functionally, specifically methylates guanosine-37 in various tRNAs. This is tRNA (guanine-N(1)-)-methyltransferase from Chlorobium chlorochromatii (strain CaD3).